The sequence spans 246 residues: Type III pantothenate kinase (246 aa).

Position 6–13 (6–13 (DVGNTHSV)) interacts with ATP. Position 103–106 (103–106 (GADR)) interacts with substrate. D105 (proton acceptor) is an active-site residue. Position 125 (D125) interacts with K(+). T128 provides a ligand contact to ATP. Residue T179 coordinates substrate.

It belongs to the type III pantothenate kinase family. Homodimer. Requires NH4(+) as cofactor. K(+) serves as cofactor.

Its subcellular location is the cytoplasm. The enzyme catalyses (R)-pantothenate + ATP = (R)-4'-phosphopantothenate + ADP + H(+). Its pathway is cofactor biosynthesis; coenzyme A biosynthesis; CoA from (R)-pantothenate: step 1/5. In terms of biological role, catalyzes the phosphorylation of pantothenate (Pan), the first step in CoA biosynthesis. The polypeptide is Type III pantothenate kinase (Thermotoga sp. (strain RQ2)).